The following is a 215-amino-acid chain: Putative BTB/POZ domain-containing protein At2g05330 (215 aa).

The BTB domain maps to serine 17 to serine 87.

Its pathway is protein modification; protein ubiquitination. Functionally, may act as a substrate-specific adapter of an E3 ubiquitin-protein ligase complex (CUL3-RBX1-BTB) which mediates the ubiquitination and subsequent proteasomal degradation of target proteins. The chain is Putative BTB/POZ domain-containing protein At2g05330 from Arabidopsis thaliana (Mouse-ear cress).